The primary structure comprises 193 residues: Ion-translocating oxidoreductase complex subunit A (193 aa).

6 helical membrane-spanning segments follow: residues 5-25, 39-59, 63-83, 102-122, 134-154, and 171-191; these read VLLL…FLGL, IGMS…SYLV, ILIP…VIAV, LLGI…VALL, AVYG…FAAL, and SIAL…TGLV.

Belongs to the NqrDE/RnfAE family. As to quaternary structure, the complex is composed of six subunits: RnfA, RnfB, RnfC, RnfD, RnfE and RnfG.

Its subcellular location is the cell inner membrane. Functionally, part of a membrane-bound complex that couples electron transfer with translocation of ions across the membrane. This is Ion-translocating oxidoreductase complex subunit A from Pseudoalteromonas translucida (strain TAC 125).